Consider the following 201-residue polypeptide: CASP-like protein 2B2 (201 aa).

Residues M1–R28 are Cytoplasmic-facing. The helical transmembrane segment at V29–I49 threads the bilayer. Over A50 to K71 the chain is Extracellular. A helical transmembrane segment spans residues A72–V92. The Cytoplasmic portion of the chain corresponds to R93–P108. Residues L109–A129 form a helical membrane-spanning segment. The Extracellular portion of the chain corresponds to A130–A166. Residues S167–F187 form a helical membrane-spanning segment. Over R188–W201 the chain is Cytoplasmic.

It belongs to the Casparian strip membrane proteins (CASP) family. Homodimer and heterodimers.

It is found in the cell membrane. The chain is CASP-like protein 2B2 from Arabidopsis thaliana (Mouse-ear cress).